The primary structure comprises 300 residues: GTPase Era (300 aa).

Positions 7–182 (YCGFIAIVGR…LRKGVHHFPE (176 aa)) constitute an Era-type G domain. A G1 region spans residues 15-22 (GRPNVGKS). 15–22 (GRPNVGKS) serves as a coordination point for GTP. The interval 41 to 45 (QTTRH) is G2. The interval 62–65 (DTPG) is G3. Residues 62–66 (DTPGL) and 124–127 (NKVD) contribute to the GTP site. The G4 stretch occupies residues 124–127 (NKVD). Positions 154–156 (ISA) are G5. Residues 206–283 (TGEELPYSVT…HLELWVKVKS (78 aa)) enclose the KH type-2 domain.

The protein belongs to the TRAFAC class TrmE-Era-EngA-EngB-Septin-like GTPase superfamily. Era GTPase family. As to quaternary structure, monomer.

The protein localises to the cytoplasm. Its subcellular location is the cell inner membrane. An essential GTPase that binds both GDP and GTP, with rapid nucleotide exchange. Plays a role in 16S rRNA processing and 30S ribosomal subunit biogenesis and possibly also in cell cycle regulation and energy metabolism. In Histophilus somni (strain 129Pt) (Haemophilus somnus), this protein is GTPase Era.